We begin with the raw amino-acid sequence, 5412 residues long: Mucin-4 (5412 aa).

The N-terminal stretch at 1-28 (MKGARWRRVPWVSLSCLCLCLLPHVVPG) is a signal peptide. 2 disordered regions span residues 40 to 87 (TAAP…TTSK) and 142 to 249 (TSTD…ATSS). The interval 43–4241 (PVTSTGSTTA…SVSTGHATPL (4199 aa)) is variable number of tandem repeats (VNTR). Residues 142–163 (TSTDSTLGNTEETSTAGTESST) are compositionally biased toward low complexity. 2 O-linked (GalNAc...) threonine glycosylation sites follow: T154 and T156. Positions 164 to 199 (PVTSAVSITAGQEGQSRTTSWRTSIQDTSASSQNHW) are enriched in polar residues. The segment covering 200-223 (TRSTQTTRESQTSTLTHRTTSTPS) has biased composition (low complexity). Positions 224 to 249 (FSPSVHNVTGTVSQKTSPSGETATSS) are enriched in polar residues. A glycan (N-linked (GlcNAc...) asparagine) is linked at N230. O-linked (GalNAc...) threonine glycosylation occurs at T234. N-linked (GlcNAc...) asparagine glycosylation is present at N255. Polar residues-rich tracts occupy residues 267–285 (TTST…SVPV), 306–328 (SPAT…HQTQ), and 358–367 (GFNPSGTVSQ). 16 disordered regions span residues 267 to 286 (TTST…VPVT), 303 to 328 (EGQS…HQTQ), 353 to 383 (LSSP…PSSV), 438 to 473 (LSPS…SFSP), 488 to 580 (WPSS…ALLS), 592 to 853 (TATS…ASAS), 868 to 963 (VPGT…SGSG), 983 to 1864 (SSAS…DASS), 1878 to 2078 (ASSV…TGHA), 2111 to 2220 (TALH…ASTG), 2232 to 2814 (SAST…TGHA), 2837 to 3306 (IPSS…SSVS), 3320 to 3580 (SAST…VSTG), 3592 to 3644 (SVST…VSTG), 3656 to 3756 (SVST…ASTG), and 3769 to 4223 (VSTG…GHAT). Residues T364, T369, and T376 are each glycosylated (O-linked (GalNAc...) threonine). The segment covering 368–383 (ETFPSGETTTSSPSSV) has biased composition (low complexity). 3 stretches are compositionally biased toward polar residues: residues 450-459 (AFHTQQSEGA), 488-526 (WPSS…TGTA), and 546-557 (TTYSSHSTTLPK). Composition is skewed to low complexity over residues 558–577 (TTGA…TGEA) and 615–627 (STNH…TSTS). N617 carries N-linked (GlcNAc...) asparagine glycosylation. 3 O-linked (GalNAc...) threonine glycosylation sites follow: T620, T666, and T688. The segment covering 628-677 (PQESPAVSQRGHTQAPQTTQESQTTRSVSPMTDTKTVTTPGSSFTASGHS) has biased composition (polar residues). Positions 705–717 (TTQAPTTALQAAP) are enriched in low complexity. A compositionally biased stretch (polar residues) spans 729–746 (GTSLSKTGALTLANSVVS). An O-linked (GalNAc...) threonine glycan is attached at T747. Residues 756–771 (TSASASTSPDTAAAMT) show a composition bias toward low complexity. The span at 772 to 789 (HTHQAESTEASGQTQTSE) shows a compositional bias: polar residues. Low complexity predominate over residues 790–828 (PASSGSRTTSAGTATPSSSGASGTTPSGSEGISTSGETT). O-linked (GalNAc...) threonine glycans are attached at residues T797, T798, T802, T804, T813, and T814. Residues 829-852 (RFSSNPSRDSHTTQSTTELLSASA) are compositionally biased toward polar residues. O-linked (GalNAc...) threonine glycans are attached at residues T881, T886, and T892. Over residues 885-903 (PTGQSSPTSPSASPQETAA) the composition is skewed to low complexity. Polar residues predominate over residues 907 to 928 (MAQTQRTRTSRGSDTISLASQA). Positions 929-950 (TDTFSTVPPTPPSITSTGLTSP) are enriched in low complexity. 54 O-linked (GalNAc...) threonine glycosylation sites follow: T931, T934, T938, T943, T945, T948, T952, T954, T1003, T1007, T1012, T1019, T1022, T1023, T1028, T1030, T1035, T1039, T1044, T1051, T1055, T1060, T1062, T1067, T1071, T1076, T1083, T1086, T1087, T1092, T1094, T1099, T1103, T1108, T1110, T1115, T1118, T1119, T1124, T1126, T1131, T1135, T1172, T1179, T1182, T1183, T1188, T1195, T1199, T1204, T1236, T1243, T1246, and T1247. Positions 951-963 (QTETHTLSPSGSG) are enriched in polar residues. Low complexity predominate over residues 1007–1024 (TPLPVTSPSSVSTGHTTP). A compositionally biased stretch (polar residues) spans 1028–1054 (TDTSSESTGHVTPLPVTSFSSASTGDS). Residues 1060–1086 (TDTSSASTGHVTPLPVTSLSSASTGDT) are compositionally biased toward polar residues. Polar residues predominate over residues 1092 to 1118 (TDTSSASTGHATSLPVTDTSSVSTGHT). Composition is skewed to polar residues over residues 1124 to 1150 (TDTS…TGHT) and 1157 to 1197 (DASS…STGH). Composition is skewed to polar residues over residues 1204–1213 (TDTSSASTGH) and 1221–1246 (DASS…TGHT). Residues 1252–1262 (TDTSSASTGQA) are compositionally biased toward polar residues. A compositionally biased stretch (low complexity) spans 1263-1279 (TSLLVTDTSSVSTGDTT). O-linked (GalNAc...) threonine glycans are attached at residues T1278, T1279, T1284, T1286, T1291, T1295, T1300, T1307, T1311, T1316, T1323, T1326, T1332, T1339, T1342, T1343, and T1348. Residues 1281-1325 (LPVTSTSSASTGHVTPLHVTSPSSASTGHATPLPVTSLSSASTGD) show a composition bias toward polar residues. Over residues 1332-1342 (TSPSSASTGDT) the composition is skewed to polar residues. Polar residues-rich tracts occupy residues 1349 to 1358 (DASSVSTGHT) and 1365 to 1405 (DASS…STGH). O-linked (GalNAc...) threonine glycosylation is found at T1380, T1387, T1390, T1391, T1396, T1403, T1407, T1412, T1444, T1451, T1454, and T1455. Polar residues-rich tracts occupy residues 1412-1421 (TDTSSASTGH) and 1429-1454 (DASS…TGHT). The segment covering 1460–1470 (TDTSSASTGQA) has biased composition (polar residues). The segment covering 1471 to 1487 (TSLLVTDTSSVSTGDTT) has biased composition (low complexity). T1486, T1487, T1492, T1494, T1499, T1503, T1508, T1515, T1519, T1524, T1531, T1534, T1540, T1547, T1550, T1551, T1556, T1563, T1566, T1567, T1572, T1579, T1582, T1583, T1588, T1590, T1598, T1599, T1604, T1611, T1614, T1615, T1620, T1622, T1627, and T1630 each carry an O-linked (GalNAc...) threonine glycan. Positions 1489–1533 (LPVTSTSSASTGHVTPLHVTSPSSASTGHATPLPVTSLSSASTGD) are enriched in polar residues. Residues 1540–1550 (TSPSSASTGDT) show a composition bias toward polar residues. Polar residues predominate over residues 1557–1582 (DASSVSTGHTTPLPVTSPSSASTGHT). Positions 1588-1614 (TDTSSASKGDTTPLPVTSPSSASTGHT) are enriched in polar residues. Over residues 1620-1631 (TDTSSASTGDTT) the composition is skewed to low complexity. Positions 1633–1661 (LPVTNASSLSTGHATPLHVTSPSSASTGH) are enriched in polar residues. N-linked (GlcNAc...) asparagine glycosylation occurs at N1637. Residues T1659, T1663, T1668, T1670, T1675, T1679, T1716, T1723, T1726, T1727, T1732, T1764, T1766, T1812, T1819, T1822, T1823, T1828, T1835, T1838, T1839, T1844, T1854, and T1855 are each glycosylated (O-linked (GalNAc...) threonine). Residues 1668-1679 (TSTSSASTGHAT) show a composition bias toward low complexity. Polar residues-rich tracts occupy residues 1701–1741 (DVSS…STGH), 1749–1773 (DASS…STAH), and 1812–1822 (TSPSSASTGDT). Over residues 1828 to 1840 (TDASSASTGDTTS) the composition is skewed to low complexity. 3 stretches are compositionally biased toward polar residues: residues 1841–1864 (LPVT…DASS), 1892–1902 (TDTNSASTGDT), and 1909–1950 (DASS…SGHT). O-linked (GalNAc...) threonine glycans are attached at residues T1931, T1934, T1935, T1940, T1950, T1951, T1956, T1963, T1995, T1999, T2004, T2006, T2015, T2020, T2027, T2030, T2031, T2036, T2038, T2047, T2052, T2062, T2063, T2132, T2137, T2139, T2142, T2143, T2148, T2150, T2155, T2159, T2164, T2180, T2182, T2187, T2191, T2196, T2198, T2203, T2207, T2244, T2254, and T2255. Positions 1957 to 1981 (DASSVPTGHATSLPVTDASSVSTGH) are enriched in polar residues. Over residues 2004-2030 (TDTSSVSTGQATPLPVTSLSSASTGDT) the composition is skewed to polar residues. Polar residues predominate over residues 2036–2077 (TDTSSASTGQDTPLPVTSLSSVSTGDTTPLPVTNPSSASTGH). A compositionally biased stretch (low complexity) spans 2125-2146 (DTTPLPVTSPSSTSTGDTTPLP). Over residues 2148–2189 (TETSSVSTGHATSLPVTDTSSASTGHATSLPVTDTSSASTGH) the composition is skewed to polar residues. Polar residues-rich tracts occupy residues 2196-2219 (TDTS…SAST) and 2232-2254 (SAST…TGDT). The span at 2261–2270 (DASSVSTGHA) shows a compositional bias: polar residues. Low complexity predominate over residues 2271–2283 (TSLPVTSLSSVST). O-linked (GalNAc...) threonine glycosylation is found at T2283, T2286, T2287, T2292, T2299, T2303, T2308, T2324, T2331, T2334, T2335, T2340, T2347, T2351, T2356, T2363, T2366, T2367, T2372, T2382, T2383, T2388, T2395, T2398, T2399, and T2406. A compositionally biased stretch (polar residues) spans 2284 to 2301 (GDTTPLPVTSPSSASTGH). Residues 2309–2349 (DASSASTGHATPLPVTSLSSASTGDTTPLPVTSPSSASTGH) show a composition bias toward polar residues. Positions 2366-2399 (TTPLPVTSSSSASSGHTTPLPVTDASSASTGDTT) are enriched in low complexity. Polar residues-rich tracts occupy residues 2404-2413 (TDTSSASTGH) and 2421-2445 (GLSS…STGH). The N-linked (GlcNAc...) asparagine glycan is linked to N2437. 14 O-linked (GalNAc...) threonine glycosylation sites follow: T2452, T2454, T2459, T2462, T2463, T2468, T2500, T2507, T2510, T2511, T2516, T2518, T2523, and T2526. Over residues 2452 to 2471 (TSTSSASTGDTTPLPGTDTS) the composition is skewed to low complexity. Residues 2485–2510 (DASSVSTGDTTRLPVTSPSSASTGHT) show a composition bias toward polar residues. Residues 2517–2573 (DTPSASTGDTTPLPVTNASSLSTRHATSLHVTSPSSASTGHATSLPVTDTSAASTGH) are compositionally biased toward polar residues. N2533 carries N-linked (GlcNAc...) asparagine glycosylation. O-linked (GalNAc...) threonine glycosylation is found at T2564, T2566, T2571, T2575, T2580, T2582, T2587, T2590, T2591, T2596, T2598, T2619, T2622, T2623, T2628, T2660, T2667, T2670, T2671, T2676, T2683, T2687, T2692, and T2694. The segment covering 2580–2591 (TSTSSASTGDTT) has biased composition (low complexity). Composition is skewed to polar residues over residues 2597–2637 (DTYS…STGH) and 2645–2691 (DASS…SLPV). The span at 2692 to 2704 (TDTSSASTGDTTS) shows a compositional bias: low complexity. Positions 2705-2723 (LPVTDTSSAYTGDTTSLPV) are enriched in polar residues. Over residues 2724–2735 (TDTSSSSTGDTT) the composition is skewed to low complexity. Residues T2740, T2742, T2750, T2751, T2756, T2758, T2763, and T2767 are each glycosylated (O-linked (GalNAc...) threonine). Residues 2740–2750 (TETSSVSTGDT) are compositionally biased toward polar residues. Residues 2756–2798 (TDTSSASTGHATPLPVTNTSSVSTGHATPLHVTSPSSASTGHT) show a composition bias toward polar residues. N-linked (GlcNAc...) asparagine glycosylation is present at N2773. 7 O-linked (GalNAc...) threonine glycosylation sites follow: T2779, T2783, T2788, T2795, T2798, T2799, and T2804. Polar residues-rich tracts occupy residues 2805 to 2814 (DASSVSTGHA) and 2837 to 2846 (IPSSASSGHT). Residues T2846, T2847, and T2852 are each glycosylated (O-linked (GalNAc...) threonine). Residues 2853 to 2877 (DASSVSTGHATSLPVTDASSVSTGH) show a composition bias toward polar residues. Residues 2895 to 2907 (TPLPLTSLSSVST) show a composition bias toward low complexity. T2910, T2911, T2916, T2918, T2923, T2927, T2932, T2939, T2942, T2943, T2948, T2950, T2955, T2959, T2966, T2971, and T2975 each carry an O-linked (GalNAc...) threonine glycan. Polar residues predominate over residues 2916–2942 (TDTSSASTGQATPLPVTSLSSVSTGDT). Residues 2948-2973 (TDTSSASTGHATSLPVTDTSSASTGH) show a composition bias toward polar residues. Polar residues-rich tracts occupy residues 2980-2989 (TDTSSASTGH) and 3009-3037 (LPVT…STGH). O-linked (GalNAc...) threonine glycans are attached at residues T3023, T3028, T3035, and T3039. Over residues 3044–3069 (TDTSSASTGHANPLHVTSPSSASTGH) the composition is skewed to polar residues. Residues T3071, T3076, T3078, T3083, T3087, T3092, T3099, T3102, T3103, T3108, T3115, T3118, T3119, T3124, T3126, T3131, T3135, T3140, T3142, T3147, T3150, T3151, T3156, T3158, T3163, T3167, T3172, T3179, T3182, T3183, T3188, T3220, T3227, T3230, T3231, T3236, T3243, T3247, T3252, and T3254 are each glycosylated (O-linked (GalNAc...) threonine). Positions 3076–3118 (TDTSSASTGHATPLPVTSLSSVSTGDTTPLPVTSPSSASTGHT) are enriched in polar residues. Over residues 3124–3134 (TDTSSASTGQA) the composition is skewed to polar residues. The segment covering 3140–3151 (TSTSSASTGDTT) has biased composition (low complexity). Polar residues-rich tracts occupy residues 3156-3197 (TDTS…STGH) and 3205-3251 (DASS…SLPV). Low complexity predominate over residues 3252–3264 (TDTSSASTGDTTS). The span at 3265-3283 (LPVTDTSSAYTGDTTSLPV) shows a compositional bias: polar residues. Low complexity predominate over residues 3284 to 3295 (TDTSSSSTGDTT). T3294, T3332, T3339, T3342, T3343, T3348, T3350, T3355, and T3359 each carry an O-linked (GalNAc...) threonine glycan. The span at 3320–3337 (SASTGHATPLHVTSPSSA) shows a compositional bias: polar residues. Residues 3338–3356 (STGDTTPVPVTDTSSVSTG) are compositionally biased toward low complexity. 2 stretches are compositionally biased toward polar residues: residues 3365-3374 (GLSSASTGDT) and 3381-3405 (DISS…STGD). Residue N3397 is glycosylated (N-linked (GlcNAc...) asparagine). O-linked (GalNAc...) threonine glycosylation is found at T3398, T3403, T3406, T3412, T3419, T3423, T3428, T3430, T3435, T3439, and T3444. Residues 3412 to 3421 (TSPSSASTGH) are compositionally biased toward polar residues. The span at 3428-3471 (TSTSSASTGHATPVPVTSTSSASTGHTTPLPVTDTSSASTGDTT) shows a compositional bias: low complexity. Residue S3445 is glycosylated (O-linked (GalNAc...) serine). 99 O-linked (GalNAc...) threonine glycosylation sites follow: T3446, T3451, T3454, T3455, T3460, T3462, T3467, T3470, T3471, T3476, T3483, T3486, T3487, T3492, T3499, T3502, T3504, T3508, T3515, T3519, T3524, T3526, T3531, T3535, T3540, T3547, T3550, T3551, T3556, T3567, T3614, T3615, T3622, T3678, T3679, T3686, T3691, T3695, T3700, T3710, T3711, T3716, T3718, T3723, T3727, T3732, T3739, T3743, T3748, T3780, T3787, T3790, T3791, T3796, T3798, T3803, T3807, T3812, T3822, T3823, T3828, T3835, T3839, T3844, T3851, T3854, T3860, T3867, T3871, T3876, T3883, T3886, T3887, T3892, T3894, T3899, T3903, T3935, T3940, T3942, T3947, T3950, T3951, T3956, T3958, T3963, T3967, T3972, T3979, T3983, T3988, T3990, T3995, T3999, T4004, T4006, T4011, T4015, and T4020. The span at 3473–3486 (LPVTSPSSASTGHT) shows a compositional bias: polar residues. Positions 3493–3517 (IPSSASTGDTSTLPVTGASSASTGH) are enriched in polar residues. A compositionally biased stretch (polar residues) spans 3524–3550 (TDTSSVSTGHATPLPVTSLSSVSTGDT). The span at 3557-3580 (DASSASTGQATPLPVTSLSSVSTG) shows a compositional bias: polar residues. A compositionally biased stretch (low complexity) spans 3604-3615 (TDTSSASTGDTT). The segment covering 3620-3644 (TDTSSASTGQATPLPVTSLSSVSTG) has biased composition (polar residues). The segment covering 3668-3679 (TDTSSASTGDTT) has biased composition (low complexity). A compositionally biased stretch (polar residues) spans 3684-3694 (TDTSSASTGQA). The span at 3710 to 3728 (TTPLPVTSTSSVSTGHVTP) shows a compositional bias: low complexity. The span at 3730–3741 (HVTSPSSASTGH) shows a compositional bias: polar residues. Positions 3780–3791 (TDASSASTGDTT) are enriched in low complexity. Residues 3796-3822 (TDTSSASTGQATPLPVTSLSSVSTGDT) are compositionally biased toward polar residues. The span at 3860–3869 (TSPSSASTGH) shows a compositional bias: polar residues. Residues 3877-3886 (GLSSASTGDT) are compositionally biased toward polar residues. A compositionally biased stretch (polar residues) spans 3892 to 3901 (TDTSSASTRH). Residues 3940 to 3951 (TSTSSASTGDTT) show a composition bias toward low complexity. Residues 3956–3981 (TDTSSVSTGHATSLPVTSRSSASTGH) are compositionally biased toward polar residues. Residues 3988–3997 (TDTSSVSTGH) show a composition bias toward polar residues. Positions 3999–4011 (TPLPVTSTSSVST) are enriched in low complexity. Residues 4018–4029 (PVTSPSSASTGH) are compositionally biased toward polar residues. Residues S4021, S4023, S4024, and S4026 are each glycosylated (O-linked (GalNAc...) serine). O-linked (GalNAc...) threonine glycans are attached at residues T4027, T4031, and T4036. Residues 4030–4047 (ATPVPVTSTSSASTGDTT) show a composition bias toward low complexity. A glycan (O-linked (GalNAc...) serine) is linked at S4037. T4038, T4043, T4046, and T4047 each carry an O-linked (GalNAc...) threonine glycan. A compositionally biased stretch (polar residues) spans 4049–4093 (LPVTNASSLSTGHATPLHVTSPSSASRGDTSTLPVTDASSASTGH). The N-linked (GlcNAc...) asparagine glycan is linked to N4053. T4078 and T4084 each carry an O-linked (GalNAc...) threonine glycan. Positions 4095 to 4107 (TPLPLTSLSSVST) are enriched in low complexity. T4110, T4111, T4116, T4118, T4123, T4127, T4132, T4139, T4142, T4143, T4148, T4158, T4159, T4164, T4171, T4175, T4180, T4182, T4187, T4190, T4191, T4196, T4198, T4203, T4207, T4212, T4214, T4219, T4223, and T4239 each carry an O-linked (GalNAc...) threonine glycan. The span at 4116–4142 (TDTSSASTGQATPLPVTSLSSVSTGDT) shows a compositional bias: polar residues. A compositionally biased stretch (polar residues) spans 4149–4173 (IPSSASSGHTTSLPVTDASSVSTGH). The segment covering 4180–4191 (TSTSSASTGDTT) has biased composition (low complexity). A compositionally biased stretch (polar residues) spans 4196-4205 (TDTSSASTGH). Residues 4212 to 4223 (TDTSSASTGHAT) are compositionally biased toward polar residues. Low complexity predominate over residues 4242 to 4254 (AVSSATSASTVSS). Residues 4242–4288 (AVSSATSASTVSSDSPLKMETPGMTTPSLKTDGGRRTATSPPPTTSQ) are disordered. O-linked (GalNAc...) threonine glycosylation is found at T4272, T4278, T4280, T4289, T4293, and T4297. Residues 4397–4552 (PFWDDADFST…GLQFYRLHRE (156 aa)) enclose the NIDO domain. Positions 4553-4668 (ERPNYRLECL…YLCALYQQRR (116 aa)) constitute an AMOP domain. Residues 4680–4880 (QPAWMFGDPH…TWQINGTGLL (201 aa)) form the VWFD domain. Residues N4715, N4768, N4787, N4796, N4831, N4852, N4875, N4902, N4928, N4946, N4982, N4997, N5045, N5052, N5100, and N5119 are each glycosylated (N-linked (GlcNAc...) asparagine). The EGF-like 1 domain maps to 5118–5157 (QNQSCPVNYCYNQGHCYISQTLGCQPMCTCPPAFTDSRCF). Cystine bridges form between C5122–C5133, C5127–C5145, and C5147–C5156. 3 N-linked (GlcNAc...) asparagine glycosylation sites follow: N5185, N5192, and N5292. One can recognise an EGF-like 2 domain in the interval 5321–5360 (VSPCSRGYCDHGGQCQHLPSGPRCSCVSFSIYTAWGEHCE). 3 disulfide bridges follow: C5324–C5335, C5329–C5344, and C5346–C5359. A helical transmembrane segment spans residues 5369 to 5389 (FFGIFFGALGGLLLLGVGTFV).

A heterodimeric complex, composed of a mucin-4 alpha chain and a cysteine-rich transmembrane mucin-4 beta chain. Mucin-4 beta chain interacts with ERBB2 via the EGF-like domain 1. In nonpolarized cells, associates with ERBB2 and ERBB3. Post-translationally, proteolytically cleaved into 2 chains, mucin-4 alpha chain and mucin-4 beta chain. In terms of processing, highly O-glycosylated. Is predominantly N-glycosylated. Expressed in the thymus, thyroid, lung, trachea, esophagus, stomach, small intestine, colon, testis, prostate, ovary, uterus, placenta, and mammary and salivary glands. Expressed in carcinomas arising from some of these epithelia, such as lung cancers, squamous cell carcinomas of the upper aerodigestive tract, mammary carcinomas, biliary tract, colon, and cervix cancers. Minimally or not expressed in the normal pancreas or chronic pancreatitis, but is highly expressed in pancreatic tumors and pancreatic tumor cell lines.

It localises to the cell membrane. The protein resides in the secreted. In terms of biological role, membrane-bound mucin, a family of highly glycosylated proteins that constitute the major component of the mucus, the slimy and viscous secretion covering epithelial surfaces. These glycoproteins play important roles in the protection of the epithelium and are implicated in epithelial renewal and differentiation. Regulates cellular behavior through both anti-adhesive effects on cell-cell and cell-extracellular matrix interactions and its ability to act as an intramembrane ligand for ERBB2. Plays an important role in proliferation and differentiation of epithelial cells by inducing specific phosphorylation of ERBB2. In polarized epithelial cells, segregates ERBB2 and other ERBB receptors and prevents ERBB2 from acting as a coreceptor. The interaction with ERBB2 leads to enhanced expression of CDKN1B. The formation of a MUC4-ERBB2-ERBB3-NRG1 complex leads to down-regulation of CDKN1B, resulting in repression of apoptosis and stimulation of proliferation. Its ability to promote tumor growth may be mainly due to repression of apoptosis as opposed to proliferation. The sequence is that of Mucin-4 (MUC4) from Homo sapiens (Human).